A 122-amino-acid chain; its full sequence is Large ribosomal subunit protein uL14 (122 aa).

This sequence belongs to the universal ribosomal protein uL14 family. Part of the 50S ribosomal subunit. Forms a cluster with proteins L3 and L19. In the 70S ribosome, L14 and L19 interact and together make contacts with the 16S rRNA in bridges B5 and B8.

Functionally, binds to 23S rRNA. Forms part of two intersubunit bridges in the 70S ribosome. In Ruminiclostridium cellulolyticum (strain ATCC 35319 / DSM 5812 / JCM 6584 / H10) (Clostridium cellulolyticum), this protein is Large ribosomal subunit protein uL14.